The following is a 693-amino-acid chain: Polyribonucleotide nucleotidyltransferase (693 aa).

Residues aspartate 490 and aspartate 496 each contribute to the Mg(2+) site. The 61-residue stretch at 557–617 folds into the KH domain; sequence PRISWFFIDP…EKVQEAVEYI (61 aa). Residues 627–691 enclose the S1 motif domain; sequence GDLYTGKVTR…DAGRLQFRRL (65 aa).

It belongs to the polyribonucleotide nucleotidyltransferase family. Mg(2+) is required as a cofactor.

It localises to the cytoplasm. The enzyme catalyses RNA(n+1) + phosphate = RNA(n) + a ribonucleoside 5'-diphosphate. Its function is as follows. Involved in mRNA degradation. Catalyzes the phosphorolysis of single-stranded polyribonucleotides processively in the 3'- to 5'-direction. This chain is Polyribonucleotide nucleotidyltransferase, found in Fervidobacterium nodosum (strain ATCC 35602 / DSM 5306 / Rt17-B1).